The chain runs to 345 residues: Probable velvet family sexual development regulator LACBIDRAFT_317102 (345 aa).

2 stretches are compositionally biased toward polar residues: residues 1-13 (MFTTHPQGRSYRS) and 24-38 (EIQNSYDQHANNPPR). Disordered stretches follow at residues 1 to 43 (MFTT…TRRR), 138 to 189 (ESWT…SPSS), and 310 to 345 (RKRRKKGEIGSPLDDPKSKRKRTSLGSEDDEASDED). A Velvet domain is found at 62-306 (GQTIRAELDE…ARWGVRLNIR (245 aa)). Low complexity-rich tracts occupy residues 141 to 158 (TSRSPTQTSFSSSSPTLS) and 167 to 184 (SSPQTSSPTAAQSQASTP). Residues 336-345 (SEDDEASDED) show a composition bias toward acidic residues.

It belongs to the velvet family.

It is found in the nucleus. Its function is as follows. Velvet-domain-containing protein that probably acts as a positive regulator of sexual development. This chain is Probable velvet family sexual development regulator LACBIDRAFT_317102, found in Laccaria bicolor (strain S238N-H82 / ATCC MYA-4686) (Bicoloured deceiver).